The following is a 192-amino-acid chain: Spermatogenesis-associated protein 3 (192 aa).

Basic residues predominate over residues 1–15; it reads MKKVKKKRSEARRHR. Disordered regions lie at residues 1–65 and 161–184; these read MKKV…TTSR and SRKPSSHRNACPPSPRNCGCGSGG. A compositionally biased stretch (low complexity) spans 19-59; that stretch reads SQHASSNSTSQQPSPESTPQQPSPESTPQQPSPESTPQHSS.

It is found in the cell projection. It localises to the cilium. Its subcellular location is the flagellum. This Homo sapiens (Human) protein is Spermatogenesis-associated protein 3 (SPATA3).